A 297-amino-acid chain; its full sequence is ATP synthase gamma chain (297 aa).

This sequence belongs to the ATPase gamma chain family. As to quaternary structure, F-type ATPases have 2 components, CF(1) - the catalytic core - and CF(0) - the membrane proton channel. CF(1) has five subunits: alpha(3), beta(3), gamma(1), delta(1), epsilon(1). CF(0) has three main subunits: a, b and c.

It is found in the cell membrane. Functionally, produces ATP from ADP in the presence of a proton gradient across the membrane. The gamma chain is believed to be important in regulating ATPase activity and the flow of protons through the CF(0) complex. The sequence is that of ATP synthase gamma chain from Arthrobacter sp. (strain FB24).